Consider the following 164-residue polypeptide: Cytochrome c-type biogenesis protein CcmE (164 aa).

Topologically, residues 1–8 (MNPRRKSR) are cytoplasmic. Residues 9–29 (LYLAIVVLIGVALTATLMLYA) form a helical; Signal-anchor for type II membrane protein membrane-spanning segment. Residues 30–164 (LRSNIDLFYT…ATPQNEGAKS (135 aa)) lie on the Periplasmic side of the membrane. 2 residues coordinate heme: His130 and Tyr134. The segment covering 131 to 148 (DEKYTPPEVADAMKENHK) has biased composition (basic and acidic residues). Residues 131 to 164 (DEKYTPPEVADAMKENHKGPASAYATPQNEGAKS) are disordered. The segment covering 155-164 (ATPQNEGAKS) has biased composition (polar residues).

The protein belongs to the CcmE/CycJ family.

The protein resides in the cell inner membrane. Its function is as follows. Heme chaperone required for the biogenesis of c-type cytochromes. Transiently binds heme delivered by CcmC and transfers the heme to apo-cytochromes in a process facilitated by CcmF and CcmH. This chain is Cytochrome c-type biogenesis protein CcmE, found in Serratia proteamaculans (strain 568).